The chain runs to 242 residues: ATP synthase subunit a (242 aa).

A run of 5 helical transmembrane segments spans residues 21–41 (LSSI…AIIC), 83–103 (AVTL…FSIV), 117–137 (DATV…FYGI), 175–195 (LYGN…LFFN), and 198–218 (AWGW…SIFV).

Belongs to the ATPase A chain family. F-type ATPases have 2 components, CF(1) - the catalytic core - and CF(0) - the membrane proton channel. CF(1) has five subunits: alpha(3), beta(3), gamma(1), delta(1), epsilon(1). CF(0) has three main subunits: a(1), b(2) and c(9-12). The alpha and beta chains form an alternating ring which encloses part of the gamma chain. CF(1) is attached to CF(0) by a central stalk formed by the gamma and epsilon chains, while a peripheral stalk is formed by the delta and b chains.

The protein resides in the cell membrane. Its function is as follows. Key component of the proton channel; it plays a direct role in the translocation of protons across the membrane. The polypeptide is ATP synthase subunit a (Staphylococcus aureus (strain Newman)).